A 232-amino-acid polypeptide reads, in one-letter code: Polycomb group RING finger protein 5-B (232 aa).

Residues 18–57 (CFVCKGYLIKPTTVTECLHTFCKSCIVQHFEDSNDCPKCG) form an RING-type zinc finger. Basic and acidic residues predominate over residues 93 to 104 (QEDEFWRRKESN). The segment at 93–128 (QEDEFWRRKESNDENGPMCKKRRVDEEDDDKGDGDY) is disordered.

As to quaternary structure, component of a PRC1-like complex.

Its subcellular location is the nucleus. Its function is as follows. Component of Polycomb group (PcG) multiprotein complexes; the complex class is required to maintain the transcriptionally repressive state of some genes. This Danio rerio (Zebrafish) protein is Polycomb group RING finger protein 5-B (pcgf5b).